A 538-amino-acid polypeptide reads, in one-letter code: NADH-quinone oxidoreductase subunit N (538 aa).

14 helical membrane passes run 12–32, 47–67, 81–101, 144–164, 170–190, 205–225, 248–268, 294–314, 317–337, 343–363, 371–391, 423–443, 472–492, and 502–522; these read IAYG…VSVL, LALA…LSGS, PTLY…VVMA, GITQ…MMLF, LLTM…MCAL, YFLL…FVYG, FLLL…GAVP, IAAF…ITTD, PVLW…AVTQ, MLAY…AAAN, LFYL…AGLV, APVL…IPLT, SAIA…ADPV, and GPAV…LGVA.

This sequence belongs to the complex I subunit 2 family. As to quaternary structure, NDH-1 is composed of 14 different subunits. Subunits NuoA, H, J, K, L, M, N constitute the membrane sector of the complex.

The protein resides in the cell membrane. The enzyme catalyses a quinone + NADH + 5 H(+)(in) = a quinol + NAD(+) + 4 H(+)(out). NDH-1 shuttles electrons from NADH, via FMN and iron-sulfur (Fe-S) centers, to quinones in the respiratory chain. The immediate electron acceptor for the enzyme in this species is believed to be a menaquinone. Couples the redox reaction to proton translocation (for every two electrons transferred, four hydrogen ions are translocated across the cytoplasmic membrane), and thus conserves the redox energy in a proton gradient. The protein is NADH-quinone oxidoreductase subunit N of Mycobacteroides abscessus (strain ATCC 19977 / DSM 44196 / CCUG 20993 / CIP 104536 / JCM 13569 / NCTC 13031 / TMC 1543 / L948) (Mycobacterium abscessus).